Consider the following 473-residue polypeptide: Cysteine--tRNA ligase (473 aa).

Residue C28 coordinates Zn(2+). The 'HIGH' region signature appears at 30–40 (MTVYDYCHLGH). Zn(2+) contacts are provided by C209, H234, and E238. Positions 282–286 (KMSKS) match the 'KMSKS' region motif. K285 contacts ATP.

Belongs to the class-I aminoacyl-tRNA synthetase family. In terms of assembly, monomer. Requires Zn(2+) as cofactor.

The protein localises to the cytoplasm. The catalysed reaction is tRNA(Cys) + L-cysteine + ATP = L-cysteinyl-tRNA(Cys) + AMP + diphosphate. This chain is Cysteine--tRNA ligase, found in Neisseria meningitidis serogroup B (strain ATCC BAA-335 / MC58).